A 229-amino-acid polypeptide reads, in one-letter code: 7-cyano-7-deazaguanine synthase (229 aa).

8–18 contributes to the ATP binding site; it reads FSGGQDSTTCL. Residues Cys186, Cys195, Cys198, and Cys201 each contribute to the Zn(2+) site.

It belongs to the QueC family. The cofactor is Zn(2+).

The enzyme catalyses 7-carboxy-7-deazaguanine + NH4(+) + ATP = 7-cyano-7-deazaguanine + ADP + phosphate + H2O + H(+). It functions in the pathway purine metabolism; 7-cyano-7-deazaguanine biosynthesis. In terms of biological role, catalyzes the ATP-dependent conversion of 7-carboxy-7-deazaguanine (CDG) to 7-cyano-7-deazaguanine (preQ(0)). This is 7-cyano-7-deazaguanine synthase from Edwardsiella ictaluri (strain 93-146).